The sequence spans 753 residues: Transcription factor SOX-30 (753 aa).

Disordered stretches follow at residues 1–45 (MERA…TLSA) and 137–161 (AKKQ…TGPR). A compositionally biased stretch (pro residues) spans 7-23 (EPPPQPRPLRPAPPPLP). The segment at residues 337–405 (VKRPMNAFMV…KHREEFPGWV (69 aa)) is a DNA-binding region (HMG box). 2 disordered regions span residues 514-575 (TGPS…SPCP) and 726-753 (PTST…LRDL). Polar residues-rich tracts occupy residues 531–563 (TVKQ…STIQ) and 726–739 (PTST…VNVT).

In terms of assembly, interacts with CTNNB1, competitively inhibiting CTNNB1-TCF7L2/TCF4 interaction.

The protein resides in the nucleus. The protein localises to the cytoplasm. Acts both as a transcriptional activator and a repressor. Binds to the DNA sequence 5'-ACAAT-3' and shows a preference for guanine residues surrounding this core motif. Binds to its own promoter and activates its own transcription. Required to activate the expression of postmeiotic genes involved in spermiogenesis. Binds to the promoter region of CTNNB1 and represses its transcription which leads to inhibition of Wnt signaling. Also inhibits Wnt signaling by binding to the CTNNB1 protein, preventing interaction of CTNNB1 with TCF7L2/TCF4. This chain is Transcription factor SOX-30 (SOX30), found in Homo sapiens (Human).